The following is a 380-amino-acid chain: Pectinesterase QRT1 (380 aa).

The first 26 residues, 1–26 (MKVEAFIPAVLLLCFGVMLCLKSSCA), serve as a signal peptide directing secretion. Asn-74 and Asn-137 each carry an N-linked (GlcNAc...) asparagine glycan. Positions 164 and 198 each coordinate substrate. Asp-221 acts as the Proton donor in catalysis. The N-linked (GlcNAc...) asparagine glycan is linked to Asn-227. An intrachain disulfide couples Cys-235 to Cys-255. The Nucleophile role is filled by Asp-242. 2 residues coordinate substrate: Arg-298 and Trp-300. Asn-302 is a glycosylation site (N-linked (GlcNAc...) asparagine).

Belongs to the pectinesterase family. Expressed in flower buds, siliques, developing guard cells, floral nectares, at the stigmatic surface, in the hypocotyl-root transition zone and the area of lateral root emergence. Not expressed in mature leaves.

The protein resides in the secreted. It localises to the cell wall. It catalyses the reaction [(1-&gt;4)-alpha-D-galacturonosyl methyl ester](n) + n H2O = [(1-&gt;4)-alpha-D-galacturonosyl](n) + n methanol + n H(+). It functions in the pathway glycan metabolism; pectin degradation; 2-dehydro-3-deoxy-D-gluconate from pectin: step 1/5. Functionally, pectinesterase required for cell type-specific pectin degradation to separate microspores. In Arabidopsis thaliana (Mouse-ear cress), this protein is Pectinesterase QRT1.